A 427-amino-acid chain; its full sequence is 3-phosphoshikimate 1-carboxyvinyltransferase (427 aa).

Residues Lys20, Ser21, and Arg25 each coordinate 3-phosphoshikimate. Lys20 contributes to the phosphoenolpyruvate binding site. Positions 90 and 118 each coordinate phosphoenolpyruvate. Residues Ser163, Ser164, Gln165, Ser191, Asp309, and Lys336 each contribute to the 3-phosphoshikimate site. Residue Gln165 participates in phosphoenolpyruvate binding. Asp309 acts as the Proton acceptor in catalysis. Phosphoenolpyruvate is bound by residues Arg340 and Arg381.

The protein belongs to the EPSP synthase family. As to quaternary structure, monomer.

It localises to the cytoplasm. The catalysed reaction is 3-phosphoshikimate + phosphoenolpyruvate = 5-O-(1-carboxyvinyl)-3-phosphoshikimate + phosphate. Its pathway is metabolic intermediate biosynthesis; chorismate biosynthesis. Functionally, catalyzes the transfer of the enolpyruvyl moiety of phosphoenolpyruvate (PEP) to the 5-hydroxyl of shikimate-3-phosphate (S3P) to produce enolpyruvyl shikimate-3-phosphate and inorganic phosphate. The sequence is that of 3-phosphoshikimate 1-carboxyvinyltransferase from Methanococcoides burtonii (strain DSM 6242 / NBRC 107633 / OCM 468 / ACE-M).